The following is a 154-amino-acid chain: Probable transport accessory protein MmpS4 (154 aa).

Transmembrane regions (helical) follow at residues 19-39 (IWIP…VYRV) and 97-117 (QLPW…NLVA).

The protein belongs to the MmpS family.

The protein localises to the cell membrane. In Mycobacterium leprae (strain TN), this protein is Probable transport accessory protein MmpS4.